Consider the following 189-residue polypeptide: Glycerol-3-phosphate acyltransferase (189 aa).

Helical transmembrane passes span 1–21 (MFWLLAIFAYLLGSLSFAILL), 51–71 (LAVLTLLGDLCKGLAPVLIAH), 77–97 (LQQQAWVGLYAVLGHLFPLYF), 111–131 (MLLGLYPPAALLAIAAWALTF), and 151–171 (LLAWQEPEALLPMSVLTLLIV).

The protein belongs to the PlsY family. In terms of assembly, probably interacts with PlsX.

The protein localises to the cell inner membrane. The enzyme catalyses an acyl phosphate + sn-glycerol 3-phosphate = a 1-acyl-sn-glycero-3-phosphate + phosphate. It participates in lipid metabolism; phospholipid metabolism. In terms of biological role, catalyzes the transfer of an acyl group from acyl-phosphate (acyl-PO(4)) to glycerol-3-phosphate (G3P) to form lysophosphatidic acid (LPA). This enzyme utilizes acyl-phosphate as fatty acyl donor, but not acyl-CoA or acyl-ACP. This Pseudomonas fluorescens (strain ATCC BAA-477 / NRRL B-23932 / Pf-5) protein is Glycerol-3-phosphate acyltransferase.